Here is a 273-residue protein sequence, read N- to C-terminus: Ribosomal protein L11 methyltransferase (273 aa).

S-adenosyl-L-methionine-binding residues include threonine 112, glycine 133, aspartate 155, and asparagine 203.

It belongs to the methyltransferase superfamily. PrmA family.

Its subcellular location is the cytoplasm. It carries out the reaction L-lysyl-[protein] + 3 S-adenosyl-L-methionine = N(6),N(6),N(6)-trimethyl-L-lysyl-[protein] + 3 S-adenosyl-L-homocysteine + 3 H(+). In terms of biological role, methylates ribosomal protein L11. This chain is Ribosomal protein L11 methyltransferase, found in Deinococcus radiodurans (strain ATCC 13939 / DSM 20539 / JCM 16871 / CCUG 27074 / LMG 4051 / NBRC 15346 / NCIMB 9279 / VKM B-1422 / R1).